A 62-amino-acid polypeptide reads, in one-letter code: Sperm protamine P1 (62 aa).

Residues 1–62 form a disordered region; the sequence is MARYRHSRSR…RYSRRRRRRY (62 aa).

Belongs to the protamine P1 family. In terms of tissue distribution, testis.

It localises to the nucleus. Its subcellular location is the chromosome. In terms of biological role, protamines substitute for histones in the chromatin of sperm during the haploid phase of spermatogenesis. They compact sperm DNA into a highly condensed, stable and inactive complex. The sequence is that of Sperm protamine P1 (PRM1) from Lagostrophus fasciatus (Banded hare-wallaby).